The sequence spans 48 residues: ATP synthase protein 8 (48 aa).

Met-1 carries the N-formylmethionine modification. The Mitochondrial intermembrane segment spans residues 1-12; it reads MPQLVPFYFTNQ. A helical membrane pass occupies residues 13-32; sequence IFYGFASLSVIVYLFSIYIL. Residues 33-48 lie on the Mitochondrial matrix side of the membrane; that stretch reads PHYLEIYVTRIFITKT.

As to quaternary structure, F-type ATP synthases have 2 components, the catalytic core F(1) and the membrane-embedded component F(0), linked together by a central stalk and a peripheral stalk. The central stalk, also called rotor shaft, is often seen as part of F(1). The peripheral stalk is seen as part of F(0). F(0) contains the membrane channel next to the rotor. F-type ATP synthases form dimers but each monomer functions independently in ATP generation. The dimer consists of 17 different polypeptides: ATP1 (subunit alpha, 3 molecules per monomer, part of F(1)), ATP2 (subunit beta, 3 copies per monomer, part of F(1)), ATP3 (subunit gamma, part of the central stalk), ATP4 (subunit b, part of the peripheral stalk), ATP5/OSCP (subunit 5/OSCP, part of the peripheral stalk), ATP6 (subunit a, part of the peripheral stalk), ATP7 (subunit d, part of the peripheral stalk), ATP8 (subunit 8, part of the peripheral stalk), OLI1 (subunit c, part of the rotor, 10 molecules per monomer), ATP14 (subunit h, part of the peripheral stalk), ATP15 (subunit epsilon, part of the central stalk), ATP16 (subunit delta, part of the central stalk), ATP17 (subunit f, part of the peripheral stalk), ATP18 (subunit i/j, part of the peripheral stalk), ATP19 (subunit k, dimer-specific, at interface between monomers), ATP20 (subunit g, at interface between monomers), TIM11 (subunit e, at interface between monomers).

Its subcellular location is the mitochondrion inner membrane. In terms of biological role, mitochondrial membrane ATP synthase (F(1)F(0) ATP synthase or Complex V) produces ATP from ADP in the presence of a proton gradient across the membrane which is generated by electron transport complexes of the respiratory chain. F-type ATP synthases consist of two structural domains, F(1) - containing the extramembraneous catalytic core, and F(0) - containing the membrane proton channel, linked together by a central stalk and a peripheral stalk. During catalysis, ATP synthesis in the catalytic domain of F(1) is coupled via a rotary mechanism of the central stalk subunits to proton translocation. Part of the complex F(0) domain. Minor subunit located with subunit a/ATP6 in the membrane. The chain is ATP synthase protein 8 from Yarrowia lipolytica (strain CLIB 122 / E 150) (Yeast).